Here is a 90-residue protein sequence, read N- to C-terminus: Putative transcript Y 12 protein (90 aa).

In Homo sapiens (Human), this protein is Putative transcript Y 12 protein (TTTY12).